The following is a 273-amino-acid chain: NADPH-dependent 7-cyano-7-deazaguanine reductase (273 aa).

A substrate-binding site is contributed by 80–82 (VES). 82-83 (SK) serves as a coordination point for NADPH. Cys180 functions as the Thioimide intermediate in the catalytic mechanism. Residue Asp187 is the Proton donor of the active site. 219-220 (HE) lines the substrate pocket. 248 to 249 (RG) provides a ligand contact to NADPH.

Belongs to the GTP cyclohydrolase I family. QueF type 2 subfamily. As to quaternary structure, homodimer.

The protein localises to the cytoplasm. It catalyses the reaction 7-aminomethyl-7-carbaguanine + 2 NADP(+) = 7-cyano-7-deazaguanine + 2 NADPH + 3 H(+). The protein operates within tRNA modification; tRNA-queuosine biosynthesis. Functionally, catalyzes the NADPH-dependent reduction of 7-cyano-7-deazaguanine (preQ0) to 7-aminomethyl-7-deazaguanine (preQ1). In Bordetella pertussis (strain Tohama I / ATCC BAA-589 / NCTC 13251), this protein is NADPH-dependent 7-cyano-7-deazaguanine reductase.